Here is a 735-residue protein sequence, read N- to C-terminus: Protostadienol synthase A (735 aa).

The stretch at 129 to 170 (KNEMIRYLLNFVNEDGGWGLWINSPSTVFGTTMNYTMLRILG) is one PFTB 1 repeat. Residue Asp-460 is the Proton donor of the active site. PFTB repeat units lie at residues 487–528 (LAEA…YDNV), 564–604 (MARC…ETVG), and 613–660 (CRNA…ALMG).

It belongs to the terpene cyclase/mutase family.

It carries out the reaction (S)-2,3-epoxysqualene = (17Z)-protosta-17(20),24-dien-3beta-ol. Functionally, protostadienol synthase which cyclizes (3S)-oxidosqualene to (17Z)-protosta-17(20),24-dien-3-beta-ol (protostadienol), the biosynthetic precursor of helvolic acid, a secondary metabolite which promotes virulence. This is Protostadienol synthase A (PDSA) from Arthroderma gypseum (strain ATCC MYA-4604 / CBS 118893) (Microsporum gypseum).